Reading from the N-terminus, the 2245-residue chain is MPEMTENETPTKKQHRKKNRETHNAVERHRKKKINAGINRIGELIPCSPALKQSKNMILDQAFKYITELKRQNDELLLNGGNNEQAEEIKKLRKQLEEIQKENGRYIELLKANDICLYDDPTIHWKGNLKNSKVSVVIPSDQVQKKIIVYSNGNQPGGNSQGTAVQGITFNVSHNLQKQTANVVPVQRTCNLVTPVSISGVYPSENKPWHQTTVPALATNQPVPLCLPAAISAQSILELPTSESESNVLGATSGSLIAVSIESEPHQHHSLHTCLNDQNSSENKNGQENPKVLKKMTPCVTNIPHSSSATATKVHHGNKSCLSIQDFRGDFQNTFVVSVTTTVCSQPPRTAGDSSPMSISKSADLTSTATVVASSAPGVGKATIPISTLSGNPLDNGWTLSCSLPSSSVSTSDLKNINSLTRISSAGNTQTTWTTLQLAGNTIQPLSQTPSSAVTPVLNESGTSPTTSNHSRYVATDINLNNSFPADGQPVEQVVVTLPSCPSLPMQPLIAQPQVKSQPPKNILPLNSAMQVIQMAQPVGSAVNSAPTNQNVIILQPPSTTPCPTVMRAEVSNQTVGQQIVIIQAANQNPLPLLPAPPPGSVRLPINGANTVIGSNNSVQNVPTPQTFGGKHLVHILPRPSSLSASNSTQTFSVTMSNQQPQTISLNGQLFALQPVMSSSGTTNQTPMQIIQPTTSEDPNTNVALNTFGALASLNQSISQMAGQSCVQLSISQPANSQTAANSQTTTANCVSLTTTAAPPVTTDSSATLASTYNLVSTSSMNTVACLPNMKSKRLNKKPGGRKHLAANKSACPLNSVRDVSKLDCPNTEGSAEPPCNDGLLESFPAVLPSVSVSQANSVSVSASHSLGVLSSESLIPESVSKSKSAEKSSPPSQESVTSEHFAMAAAKSKDSTPNLQQETSQDKPPSSLALSDAAKPCASANVLIPSPSDPHILVSQVPGLSSTTSTTSTDCVSEVEIIAEPCRVEQDSSDTMQTTGLLKGQGLTTLLSDLAKKKNPQKSSLSDQMDHPDFSSENPKIVDSSVNLHPKQELLLMNNDDRDPPQHHSCLPDQEVINGSLINGRQADSPMSTSSGSSRSFSVASMLPETTREDVTSNATTNTCDSCTFVEQTDIVALAARAIFDQENLEKGRVGLQADIREVASKPSEASLLEGDPPFKSQIPKESGTGQAEATPNEFNSQGSIEATMERPLEKPSCSLGIKTSNASLQDSTSQPPSITSLSVNNLIHQSSISHPLASCAGLSPTSEQTTVPATVNLTVSSSSYGSQPPGPSLMTEYSQEQLNTMTSTIPNSQIQEPLLKPSHESRKDSAKRAVQDDLLLSSAKRQKHCQPAPLRLESMSLMSRTPDTISDQTQMMVSQIPPNSSNSVVPVSNPAHGDGLTRLFPPSNNFVTPALRQTEVQCGSQPSVAEQQQTQASQHLQALQQHVPAQGVSHLHSNHLYIKQQQQQQQQQQQQQQQQQAGQLRERHHLYQMQHHVPHAESSVHSQPHNVHQQRTLQQEVQMQKKRNLVQGTQTSQLSLQPKHHGTDQSRSKTGQPHPHHQQMQQQMQQHFGSSQTEKSCENPSTSRNHHNHPQNHLNQDIMHQQQDVGSRQQGSGVSSEHVSGHNPMQRLLTSRGLEQQMVSQPSIVTRSSDMTCTPHRPERNRVSSYSAEALIGKTSSNSEQRMGISIQGSRVSDQLEMRSYLDVPRNKSLAIHNMQGRVDHTVASDIRLSDCQTFKPSGASQQPQSNFEVQSSRNNEIGNPVSSLRSMQSQAFRISQNTGPPPIDRQKRLSYPPVQSIPTGNGIPSRDSENTCHQSFMQSLLAPHLSDQVIGSQRSLSEHQRNTQCGPSSAIEYNCPPTHENVHIRRESESQNRESCDMSLGAINTRNSTLNIPFSSSSSSGDIQGRNTSPNVSVQKSNPMRITESHATKGHMNPPVTTNMHGVARPALPHPSVSHGNGDQGPAVRQANSSVPQRSRHPLQDSSGSKIRQPERNRSGNQRQSTVFDPSLPHLPLSTGGSMILGRQQPATEKRGSIVRFMPDSPQVPNDNSGPDQHTLSQNFGFSFIPEGGMNPPINANASFIPQVTQPSATRTPALIPVDPQNTLPSFYPPYSPAHPTLSNDISIPYFPNQMFSNPSTEKVNSGSLNNRFGSILSPPRPVGFAQPSFPLLPDMPPMHMTNSHLSNFNMTSLFPEIATALPDGSAMSPLLTIANSSASDSSKQSSNRPAHNISHILGHDCSSAV.

The tract at residues Met-1–Arg-28 is disordered. One can recognise a bHLH domain in the interval Lys-18–Leu-69. Residues Leu-77–Ala-112 adopt a coiled-coil conformation. Disordered regions lie at residues Leu-271–Pro-290, Ser-447–His-470, Ser-881–Glu-900, Ala-906–Asp-933, Lys-1015–Ser-1041, Pro-1164–Ser-1238, Ile-1307–Ala-1331, Ile-1460–His-1624, Leu-1636–Arg-1664, Thr-1736–Val-1764, Ile-1777–Cys-1815, Gly-1834–Pro-1859, and Ser-1891–Thr-2031. Residues Thr-273 to Glu-288 show a composition bias toward polar residues. The span at Ser-881 to Ser-896 shows a compositional bias: low complexity. A compositionally biased stretch (polar residues) spans Ser-912–Pro-925. Composition is skewed to polar residues over residues Gly-1185–Ile-1202 and Ile-1219–Ser-1238. Over residues Pro-1319–Ala-1331 the composition is skewed to basic and acidic residues. The segment covering Gln-1462–Gln-1478 has biased composition (low complexity). Composition is skewed to polar residues over residues Ser-1501–Gln-1520 and Val-1528–Leu-1538. Over residues Gln-1560–His-1569 the composition is skewed to low complexity. Positions Phe-1570 to Ser-1585 are enriched in polar residues. Residues Gln-1593–His-1624 show a composition bias toward low complexity. Polar residues predominate over residues Leu-1636–Thr-1654. Polar residues-rich tracts occupy residues Gly-1904–Met-1923 and Ser-1998–Phe-2007.

The protein localises to the nucleus. Involved in the negative regulation of epithelial-mesenchymal transition, the process by which epithelial cells lose their polarity and adhesion properties to become mesenchymal cells with enhanced migration and invasive properties. This is Basic helix-loop-helix domain-containing protein USF3 from Homo sapiens (Human).